A 317-amino-acid polypeptide reads, in one-letter code: uncharacterized protein (317 aa).

The next 7 membrane-spanning stretches (helical) occupy residues 24–44 (ISII…TGIM), 63–83 (LSIS…SILA), 136–156 (LGVA…ISED), 187–207 (LIPI…IGFF), 229–249 (ILAL…GGFL), 252–272 (GILS…LTFS), and 295–315 (IVMV…AGLL).

To M.jannaschii MJ0880, MJ1556 and MJ1589.

It localises to the cell membrane. This is an uncharacterized protein from Methanocaldococcus jannaschii (strain ATCC 43067 / DSM 2661 / JAL-1 / JCM 10045 / NBRC 100440) (Methanococcus jannaschii).